A 428-amino-acid polypeptide reads, in one-letter code: Phosphomethylpyrimidine synthase (428 aa).

Residues Asn66, Met94, Tyr123, His162, Ser184–Gly186, Asp225–Arg228, and Glu264 each bind substrate. Residue His268 participates in Zn(2+) binding. Residue Tyr291 participates in substrate binding. His332 provides a ligand contact to Zn(2+). 3 residues coordinate [4Fe-4S] cluster: Cys408, Cys411, and Cys415.

It belongs to the ThiC family. The cofactor is [4Fe-4S] cluster.

The enzyme catalyses 5-amino-1-(5-phospho-beta-D-ribosyl)imidazole + S-adenosyl-L-methionine = 4-amino-2-methyl-5-(phosphooxymethyl)pyrimidine + CO + 5'-deoxyadenosine + formate + L-methionine + 3 H(+). It participates in cofactor biosynthesis; thiamine diphosphate biosynthesis. Catalyzes the synthesis of the hydroxymethylpyrimidine phosphate (HMP-P) moiety of thiamine from aminoimidazole ribotide (AIR) in a radical S-adenosyl-L-methionine (SAM)-dependent reaction. The sequence is that of Phosphomethylpyrimidine synthase from Sulfolobus acidocaldarius (strain ATCC 33909 / DSM 639 / JCM 8929 / NBRC 15157 / NCIMB 11770).